Here is a 221-residue protein sequence, read N- to C-terminus: NEP1-interacting protein-like 1 (221 aa).

3 consecutive transmembrane segments (helical) span residues 35-55, 69-89, and 95-115; these read LFTF…GALI, VGAI…LLLW, and GIGC…GRLV. An RING-type; atypical zinc finger spans residues 176–218; sequence CSVCLQDFQVGETVRSLPHCHHMFHLPCIDKWLRRHASCPLCR.

This sequence belongs to the RING-type zinc finger family. NIP subfamily.

It is found in the membrane. In terms of biological role, may be involved in the early steps of the plant defense signaling pathway. This Arabidopsis thaliana (Mouse-ear cress) protein is NEP1-interacting protein-like 1 (ATL27).